The sequence spans 74 residues: Major structural pilin EpdE (74 aa).

Residues 1 to 12 (MKFLEKLTSKKG) constitute a propeptide that is removed on maturation. Position 13 is a pyrrolidone carboxylic acid (Gln-13). The short motif at 13–21 (QIAMELGIL) is the QXSXEXXXL element.

Post-translationally, the N-terminus is cleaved by the prepilin peptidase EppA, which recognizes the class III signal sequence. N-glycosylated. Glycosylated with an N-linked branched pentasaccharide glycan. May contain glycans at three sites. Glycosylation is AglB-dependent. The N-glycosylation does not occur unless the signal peptide has been cleaved first.

The protein resides in the secreted. It is found in the cell surface. It localises to the fimbrium. Its function is as follows. Major component of the type IV-like pili. The protein is Major structural pilin EpdE of Methanococcus maripaludis (strain DSM 14266 / JCM 13030 / NBRC 101832 / S2 / LL).